The sequence spans 609 residues: Pentatricopeptide repeat-containing protein At1g03540 (609 aa).

PPR repeat units lie at residues 25-59 (SAPT…EIPA), 60-94 (TPKL…GLET), 95-126 (DRNV…RFVK), 127-161 (DAIS…GLDA), 162-196 (NEFT…GFEW), 197-227 (NHFI…MPEP), 228-263 (DVIC…GLVP), 264-298 (DGST…GIGS), 299-329 (NVVV…MSKK), 330-364 (NSVS…DLYC), 396-426 (NVIV…MSIR), 427-461 (NMIT…GIKP), 462-497 (DYIS…GIKP), and 498-532 (GTEH…NDAS). Residues 533–609 (LWGVLLGPCA…TVGQSWIDAH (77 aa)) are type E motif.

This sequence belongs to the PPR family. PCMP-E subfamily.

The chain is Pentatricopeptide repeat-containing protein At1g03540 (PCMP-E4) from Arabidopsis thaliana (Mouse-ear cress).